The sequence spans 124 residues: Group 1 truncated hemoglobin GlbN (124 aa).

Heme-binding residues include H46, H70, and H117.

The protein belongs to the truncated hemoglobin family. Group I subfamily. Monomer. Heme is required as a cofactor.

Functionally, forms a very stable complex with oxygen. The oxygen dissociation rate is 0.011 sec(-1). This chain is Group 1 truncated hemoglobin GlbN (glbN), found in Synechocystis sp. (strain ATCC 27184 / PCC 6803 / Kazusa).